The primary structure comprises 115 residues: Basic leucine zipper transcriptional factor ATF-like (115 aa).

Positions 1-60 (MQQESDRNEQGYSSSPPSSNKQDSSDDTKKNHRREKNRIAAQKSRQRQTEKADSLHIESE) are disordered. The segment covering 13–22 (SSSPPSSNKQ) has biased composition (low complexity). The bZIP domain maps to 27-90 (DTKKNHRREK…KYLTCVLSTH (64 aa)). The basic motif stretch occupies residues 29–51 (KKNHRREKNRIAAQKSRQRQTEK). The span at 47-60 (RQTEKADSLHIESE) shows a compositional bias: basic and acidic residues. The segment at 55-83 (LHIESENLERLNSALRGEISGLREELKYL) is leucine-zipper.

This sequence belongs to the bZIP family.

Its subcellular location is the nucleus. It is found in the cytoplasm. AP-1 family transcription factor that controls the differentiation of lineage-specific cells in the immune system: specifically mediates the differentiation of T-helper 17 cells (Th17), follicular T-helper cells (TfH), CD8(+) dendritic cells and class-switch recombination (CSR) in B-cells. This is Basic leucine zipper transcriptional factor ATF-like (batf) from Xenopus laevis (African clawed frog).